A 169-amino-acid chain; its full sequence is Small ribosomal subunit protein bS18c (169 aa).

Residues 1–61 (MYTSKQPFLK…RRPRIGPGDR (61 aa)) are disordered. Positions 27–55 (QTFRKSKQTFRKFKQPFRKSKQPFRRRPR) are enriched in basic residues.

This sequence belongs to the bacterial ribosomal protein bS18 family. In terms of assembly, part of the 30S ribosomal subunit.

It is found in the plastid. It localises to the chloroplast. The sequence is that of Small ribosomal subunit protein bS18c from Agrostis stolonifera (Creeping bentgrass).